The chain runs to 406 residues: MNNPIEGHAGGRLRVLVLGSTGSIGTQALEVIAANPDRFEVVGLAAGGAQLDTLLRQRAATGVTNIAIADDRAAQLAGDIPYHGTDAVTRLVEETEADVVLNALVGALGLRPTLAALHTGARLALANKESLVAGGSLVLAAAQPGQIVPVDSEHSALAQCLRGGTPDEVAKLVLTASGGPFRGWNAGDLERVTPEQAGVHPTWSMGTMNTLNSASLVNKGLELIEANLLFGIPYDRIEVVVHPQSIVHSMVTFIDGSTIAQASPPDMKLPISLALGWPQRVGGAARACAFTTASTWEFEPLDIDVFPAVELARHAGQIGGCMTAIYDAANEEAAEAFLQGRIGFPAIVATIADVLQRADQWAPQWGEGPATVDDVLDAQRWARERALCAVATASSGKVSDMVLERS.

Residues threonine 21, glycine 22, serine 23, isoleucine 24, glycine 47, glutamine 50, and asparagine 127 each coordinate NADPH. Lysine 128 provides a ligand contact to 1-deoxy-D-xylulose 5-phosphate. Glutamate 129 contributes to the NADPH binding site. Aspartate 151 provides a ligand contact to Mn(2+). 1-deoxy-D-xylulose 5-phosphate-binding residues include serine 152, glutamate 153, serine 177, and histidine 200. Position 153 (glutamate 153) interacts with Mn(2+). NADPH is bound at residue glycine 206. Positions 213, 218, 219, and 222 each coordinate 1-deoxy-D-xylulose 5-phosphate. A Mn(2+)-binding site is contributed by glutamate 222.

This sequence belongs to the DXR family. The cofactor is Mg(2+). It depends on Mn(2+) as a cofactor.

The catalysed reaction is 2-C-methyl-D-erythritol 4-phosphate + NADP(+) = 1-deoxy-D-xylulose 5-phosphate + NADPH + H(+). Its pathway is isoprenoid biosynthesis; isopentenyl diphosphate biosynthesis via DXP pathway; isopentenyl diphosphate from 1-deoxy-D-xylulose 5-phosphate: step 1/6. Catalyzes the NADPH-dependent rearrangement and reduction of 1-deoxy-D-xylulose-5-phosphate (DXP) to 2-C-methyl-D-erythritol 4-phosphate (MEP). In Mycobacterium leprae (strain Br4923), this protein is 1-deoxy-D-xylulose 5-phosphate reductoisomerase.